The chain runs to 103 residues: Integration host factor subunit alpha (103 aa).

The interval phenylalanine 51–isoleucine 73 is disordered.

It belongs to the bacterial histone-like protein family. Heterodimer of an alpha and a beta chain.

Functionally, this protein is one of the two subunits of integration host factor, a specific DNA-binding protein that functions in genetic recombination as well as in transcriptional and translational control. The sequence is that of Integration host factor subunit alpha from Azoarcus sp. (strain BH72).